Reading from the N-terminus, the 339-residue chain is Phosphate acyltransferase (339 aa).

The protein belongs to the PlsX family. In terms of assembly, homodimer. Probably interacts with PlsY.

It localises to the cytoplasm. The enzyme catalyses a fatty acyl-[ACP] + phosphate = an acyl phosphate + holo-[ACP]. Its pathway is lipid metabolism; phospholipid metabolism. Its function is as follows. Catalyzes the reversible formation of acyl-phosphate (acyl-PO(4)) from acyl-[acyl-carrier-protein] (acyl-ACP). This enzyme utilizes acyl-ACP as fatty acyl donor, but not acyl-CoA. This Ruthia magnifica subsp. Calyptogena magnifica protein is Phosphate acyltransferase.